The sequence spans 694 residues: Follicle-stimulating hormone receptor (694 aa).

The N-terminal stretch at 1–17 is a signal peptide; it reads MALLLVSLLAFLSLGSG. 2 cysteine pairs are disulfide-bonded: C18-C25 and C23-C32. Positions 18–46 constitute an LRRNT domain; the sequence is CHHRVCHCSNRVFLCQESKVTEIPSDLPR. Topologically, residues 18 to 365 are extracellular; the sequence is CHHRVCHCSN…EDIMGYDILR (348 aa). LRR repeat units lie at residues 49–72, 73–97, 98–118, 119–143, 144–169, 170–192, 193–216, 217–240, and 241–259; these read LELR…FGDL, EKIE…LPKL, HEIR…AFQN, LPNL…KIQS, LQKV…MGLS, FEST…AFNG, TQLD…VFQG, ASGP…GLEN, and LKKL…PSLE. N191 and N199 each carry an N-linked (GlcNAc...) asparagine glycan. The N-linked (GlcNAc...) asparagine glycan is linked to N268. 4 disulfides stabilise this stretch: C275–C345, C276–C292, C276–C355, and C292–C337. The N-linked (GlcNAc...) asparagine glycan is linked to N293. Y334 is subject to Sulfotyrosine. Residues 366 to 386 form a helical membrane-spanning segment; it reads VLIWFISILAITGNIIVLVIL. Residues 387-397 are Cytoplasmic-facing; it reads ITSQYKLTVPR. A helical membrane pass occupies residues 398 to 420; it reads FLMCNLAFADLCIGIYLLLIASV. Residues 421-442 are Extracellular-facing; it reads DIHTKSQYHNYAIDWQTGAGCD. A disulfide bridge links C441 with C516. A helical membrane pass occupies residues 443-464; that stretch reads AAGFFTVFASELSVYTLTAITL. Topologically, residues 465 to 484 are cytoplasmic; the sequence is ERWHTITHAMQLECKVQLRH. Residues 485 to 507 traverse the membrane as a helical segment; the sequence is AASVMLVGWIFAFAVALLPIFGI. The Extracellular portion of the chain corresponds to 508-527; the sequence is STYMKVSICLPMDIDSPLSQ. Residues 528-549 form a helical membrane-spanning segment; it reads LYVMSLLVLNVLAFVVICGCYI. Topologically, residues 550-572 are cytoplasmic; that stretch reads HIYLTVRNPNIVSSSSDTKIAKR. A helical transmembrane segment spans residues 573 to 596; that stretch reads MAILIFTDFLCMAPISFFAISASL. At 597–607 the chain is on the extracellular side; it reads KVPLITVSKSK. Residues 608-629 form a helical membrane-spanning segment; the sequence is ILLVLFYPINSCANPFLYAIFT. The Cytoplasmic segment spans residues 630 to 694; that stretch reads KNFRRDFFIL…LVPLSHLAQN (65 aa).

It belongs to the G-protein coupled receptor 1 family. FSH/LSH/TSH subfamily. In terms of assembly, homotrimer. Functions as a homotrimer binding the FSH hormone heterodimer composed of CGA and FSHB. Interacts with ARRB2. Interacts with APPL2; interaction is independent of follicle stimulating hormone stimulation. In terms of processing, N-glycosylated; indirectly required for FSH-binding, possibly via a conformational change that allows high affinity binding of hormone. Post-translationally, sulfated.

The protein localises to the cell membrane. In terms of biological role, g protein-coupled receptor for follitropin, the follicle-stimulating hormone. Through cAMP production activates the downstream PI3K-AKT and ERK1/ERK2 signaling pathways. The sequence is that of Follicle-stimulating hormone receptor (FSHR) from Equus caballus (Horse).